Reading from the N-terminus, the 759-residue chain is TY1 enhancer activator (759 aa).

The disordered stretch occupies residues 1 to 61 (MTAPLWPNKN…GTGANTLTNG (61 aa)). T22 bears the Phosphothreonine mark. The segment covering 30–51 (SSTNASSNEENSRSSSAANVRS) has biased composition (low complexity). Residues 70–96 (CTNCRNRRKKCDLGFPCGNCSRLELVC) constitute a DNA-binding region (zn(2)-C6 fungal-type). The interval 229–254 (LTPQGEKKKKPLVKGSLYPEGPVSYK) is disordered. A 9aaTAD motif is present at residues 744-752 (DDLIRELFG). At T755 the chain carries Phosphothreonine.

The protein resides in the nucleus. Functionally, TY1 element enhancer binding protein. Binds to the DNA sequence 5'-TCGGTGGTATTATTCCGA-3'. In Saccharomyces cerevisiae (strain ATCC 204508 / S288c) (Baker's yeast), this protein is TY1 enhancer activator (TEA1).